Reading from the N-terminus, the 78-residue chain is Apolipoprotein C-I (78 aa).

A signal peptide spans 1 to 26 (MRLILCLPVLVVVLLMVLEGPAPAQG).

This sequence belongs to the apolipoprotein C1 family.

The protein resides in the secreted. Functionally, inhibitor of lipoprotein binding to the low density lipoprotein (LDL) receptor, LDL receptor-related protein, and very low density lipoprotein (VLDL) receptor. Associates with high density lipoproteins (HDL) and the triacylglycerol-rich lipoproteins in the plasma and makes up about 10% of the protein of the VLDL and 2% of that of HDL. Appears to interfere directly with fatty acid uptake and is also the major plasma inhibitor of cholesteryl ester transfer protein (CETP). Binds free fatty acids and reduces their intracellular esterification. Modulates the interaction of APOE with beta-migrating VLDL and inhibits binding of beta-VLDL to the LDL receptor-related protein. This Acinonyx jubatus (Cheetah) protein is Apolipoprotein C-I (APOC1).